Consider the following 360-residue polypeptide: Peptide chain release factor 1 (360 aa).

At glutamine 235 the chain carries N5-methylglutamine.

The protein belongs to the prokaryotic/mitochondrial release factor family. In terms of processing, methylated by PrmC. Methylation increases the termination efficiency of RF1.

The protein resides in the cytoplasm. In terms of biological role, peptide chain release factor 1 directs the termination of translation in response to the peptide chain termination codons UAG and UAA. This Methylobacillus flagellatus (strain ATCC 51484 / DSM 6875 / VKM B-1610 / KT) protein is Peptide chain release factor 1.